A 205-amino-acid polypeptide reads, in one-letter code: Thiamine-phosphate synthase (205 aa).

Residues 34–38 and Asn-66 contribute to the 4-amino-2-methyl-5-(diphosphooxymethyl)pyrimidine site; that span reads QLRCK. Positions 67 and 86 each coordinate Mg(2+). Ser-105 lines the 4-amino-2-methyl-5-(diphosphooxymethyl)pyrimidine pocket. 131-133 is a 2-[(2R,5Z)-2-carboxy-4-methylthiazol-5(2H)-ylidene]ethyl phosphate binding site; sequence TTT. Lys-134 provides a ligand contact to 4-amino-2-methyl-5-(diphosphooxymethyl)pyrimidine. Residue Gly-163 participates in 2-[(2R,5Z)-2-carboxy-4-methylthiazol-5(2H)-ylidene]ethyl phosphate binding.

It belongs to the thiamine-phosphate synthase family. Mg(2+) serves as cofactor.

The catalysed reaction is 2-[(2R,5Z)-2-carboxy-4-methylthiazol-5(2H)-ylidene]ethyl phosphate + 4-amino-2-methyl-5-(diphosphooxymethyl)pyrimidine + 2 H(+) = thiamine phosphate + CO2 + diphosphate. The enzyme catalyses 2-(2-carboxy-4-methylthiazol-5-yl)ethyl phosphate + 4-amino-2-methyl-5-(diphosphooxymethyl)pyrimidine + 2 H(+) = thiamine phosphate + CO2 + diphosphate. It carries out the reaction 4-methyl-5-(2-phosphooxyethyl)-thiazole + 4-amino-2-methyl-5-(diphosphooxymethyl)pyrimidine + H(+) = thiamine phosphate + diphosphate. It participates in cofactor biosynthesis; thiamine diphosphate biosynthesis; thiamine phosphate from 4-amino-2-methyl-5-diphosphomethylpyrimidine and 4-methyl-5-(2-phosphoethyl)-thiazole: step 1/1. Functionally, condenses 4-methyl-5-(beta-hydroxyethyl)thiazole monophosphate (THZ-P) and 2-methyl-4-amino-5-hydroxymethyl pyrimidine pyrophosphate (HMP-PP) to form thiamine monophosphate (TMP). This Neisseria meningitidis serogroup B (strain ATCC BAA-335 / MC58) protein is Thiamine-phosphate synthase.